Consider the following 1477-residue polypeptide: Inositol hexakisphosphate and diphosphoinositol-pentakisphosphate kinase 1 (1477 aa).

Residues 27–47 (TRGLGMRPEESDSELLEDEED) are disordered. Residues 37-47 (SDSELLEDEED) show a composition bias toward acidic residues. 64 to 65 (KK) lines the substrate pocket. Residues R145, K198, H205, R224, 248–251 (EEFM), and 257–259 (DVK) each bind ATP. Residue 224–225 (RK) coordinates substrate. Substrate contacts are provided by K259 and R273. ATP-binding positions include S275, D320, and 332-334 (DVN). 337–340 (SFVK) is a binding site for substrate. Residues 382–453 (PTTSGTMMEL…VLDITRLLLA (72 aa)) are polyphosphoinositide-binding domain. The tract at residues 910–1016 (KGVEEEGSAP…PTEMKQSGLG (107 aa)) is disordered. Phosphoserine is present on residues S940 and S983. Over residues 1001-1016 (FSSSRPPTEMKQSGLG) the composition is skewed to polar residues. S1033, S1069, S1141, and S1148 each carry phosphoserine. Disordered regions lie at residues 1131–1248 (HSNQ…KPCQ) and 1438–1477 (REEV…SFSH). Over residues 1164-1182 (SSGPSSTVSSAGPSSPTAV) the composition is skewed to low complexity. A compositionally biased stretch (polar residues) spans 1446-1460 (CPPSNANPQSQSLAP).

The protein belongs to the histidine acid phosphatase family. VIP1 subfamily.

It localises to the cytoplasm. The protein resides in the cytosol. Its subcellular location is the cell membrane. The enzyme catalyses 1D-myo-inositol hexakisphosphate + ATP = 1-diphospho-1D-myo-inositol 2,3,4,5,6-pentakisphosphate + ADP. It catalyses the reaction 5-diphospho-1D-myo-inositol 1,2,3,4,6-pentakisphosphate + ATP + H(+) = 1,5-bis(diphospho)-1D-myo-inositol 2,3,4,6-tetrakisphosphate + ADP. Bifunctional inositol kinase that acts in concert with the IP6K kinases IP6K1, IP6K2 and IP6K3 to synthesize the diphosphate group-containing inositol pyrophosphates diphosphoinositol pentakisphosphate, PP-InsP5, and bis-diphosphoinositol tetrakisphosphate, (PP)2-InsP4. PP-InsP5 and (PP)2-InsP4, also respectively called InsP7 and InsP8, regulate a variety of cellular processes, including apoptosis, vesicle trafficking, cytoskeletal dynamics, exocytosis, insulin signaling and neutrophil activation. Phosphorylates inositol hexakisphosphate (InsP6) at position 1 to produce PP-InsP5 which is in turn phosphorylated by IP6Ks to produce (PP)2-InsP4. Alternatively, phosphorylates PP-InsP5 at position 1, produced by IP6Ks from InsP6, to produce (PP)2-InsP4. Activated when cells are exposed to hyperosmotic stress. This chain is Inositol hexakisphosphate and diphosphoinositol-pentakisphosphate kinase 1, found in Bos taurus (Bovine).